The following is a 241-amino-acid chain: Tetrahydromethanopterin S-methyltransferase subunit A (241 aa).

The Cytoplasmic portion of the chain corresponds to 1-220 (MAEKKEPAEG…HSGVLAGKIE (220 aa)). H85 lines the 5-hydroxybenzimidazolylcob(I)amide pocket. Residues 221–241 (GIMVGLVLSLFVLGLLLFGGM) form a helical membrane-spanning segment.

Belongs to the MtrA family. In terms of assembly, the complex is composed of 8 subunits; MtrA, MtrB, MtrC, MtrD, MtrE, MtrF, MtrG and MtrH. 5-hydroxybenzimidazolylcob(I)amide is required as a cofactor.

The protein resides in the cell membrane. The enzyme catalyses 5-methyl-5,6,7,8-tetrahydromethanopterin + coenzyme M + 2 Na(+)(in) = 5,6,7,8-tetrahydromethanopterin + methyl-coenzyme M + 2 Na(+)(out). The protein operates within one-carbon metabolism; methanogenesis from CO(2); methyl-coenzyme M from 5,10-methylene-5,6,7,8-tetrahydromethanopterin: step 2/2. Part of a complex that catalyzes the formation of methyl-coenzyme M and tetrahydromethanopterin from coenzyme M and methyl-tetrahydromethanopterin. This is an energy-conserving, sodium-ion translocating step. In Methanohalobium evestigatum (strain ATCC BAA-1072 / DSM 3721 / NBRC 107634 / OCM 161 / Z-7303), this protein is Tetrahydromethanopterin S-methyltransferase subunit A.